The following is a 184-amino-acid chain: Photosystem I assembly protein Ycf4 (184 aa).

2 helical membrane-spanning segments follow: residues 22–42 (FCWA…GTSS) and 57–77 (IIFF…LFIS).

The protein belongs to the Ycf4 family.

It is found in the plastid. The protein resides in the chloroplast thylakoid membrane. Seems to be required for the assembly of the photosystem I complex. This is Photosystem I assembly protein Ycf4 from Draba nemorosa (Woodland whitlowgrass).